A 123-amino-acid chain; its full sequence is Ribosome-binding factor A (123 aa).

It belongs to the RbfA family. As to quaternary structure, monomer. Binds 30S ribosomal subunits, but not 50S ribosomal subunits or 70S ribosomes.

It is found in the cytoplasm. Its function is as follows. One of several proteins that assist in the late maturation steps of the functional core of the 30S ribosomal subunit. Associates with free 30S ribosomal subunits (but not with 30S subunits that are part of 70S ribosomes or polysomes). Required for efficient processing of 16S rRNA. May interact with the 5'-terminal helix region of 16S rRNA. The polypeptide is Ribosome-binding factor A (Neisseria gonorrhoeae (strain NCCP11945)).